The following is a 518-amino-acid chain: Putative cysteine ligase BshC (518 aa).

Positions 404-474 form a coiled coil; that stretch reads AAASAERLAA…RARQLTRLKR (71 aa).

Belongs to the BshC family.

The polypeptide is Putative cysteine ligase BshC (Deinococcus geothermalis (strain DSM 11300 / CIP 105573 / AG-3a)).